Reading from the N-terminus, the 117-residue chain is MARVTVEDCVDKVPNRFELVMLAAHRAREIASGSSLTIDRDNDKNPVVALREIAEETQSAESLRERMIESHQTQIEVDEPEEDQMALLMGSEVDRPVQDDMSEEKLLRALMEAQGQN.

This sequence belongs to the RNA polymerase subunit omega family. As to quaternary structure, the RNAP catalytic core consists of 2 alpha, 1 beta, 1 beta' and 1 omega subunit. When a sigma factor is associated with the core the holoenzyme is formed, which can initiate transcription.

The catalysed reaction is RNA(n) + a ribonucleoside 5'-triphosphate = RNA(n+1) + diphosphate. In terms of biological role, promotes RNA polymerase assembly. Latches the N- and C-terminal regions of the beta' subunit thereby facilitating its interaction with the beta and alpha subunits. In Cereibacter sphaeroides (strain ATCC 17029 / ATH 2.4.9) (Rhodobacter sphaeroides), this protein is DNA-directed RNA polymerase subunit omega.